The chain runs to 43 residues: Protein PsbN (43 aa).

A helical transmembrane segment spans residues Thr5–Phe27.

Belongs to the PsbN family.

Its subcellular location is the plastid. It is found in the chloroplast thylakoid membrane. In terms of biological role, may play a role in photosystem I and II biogenesis. In Cedrus deodara (Deodar cedar), this protein is Protein PsbN.